A 427-amino-acid chain; its full sequence is Enolase (427 aa).

A (2R)-2-phosphoglycerate-binding site is contributed by Q162. Residue E204 is the Proton donor of the active site. Residues D241, E282, and D309 each contribute to the Mg(2+) site. Residues K334, R363, S364, and K385 each contribute to the (2R)-2-phosphoglycerate site. The active-site Proton acceptor is the K334.

The protein belongs to the enolase family. Mg(2+) is required as a cofactor.

It localises to the cytoplasm. The protein resides in the secreted. It is found in the cell surface. The catalysed reaction is (2R)-2-phosphoglycerate = phosphoenolpyruvate + H2O. It functions in the pathway carbohydrate degradation; glycolysis; pyruvate from D-glyceraldehyde 3-phosphate: step 4/5. Functionally, catalyzes the reversible conversion of 2-phosphoglycerate (2-PG) into phosphoenolpyruvate (PEP). It is essential for the degradation of carbohydrates via glycolysis. The protein is Enolase of Parafrankia sp. (strain EAN1pec).